We begin with the raw amino-acid sequence, 76 residues long: MAERPLDVIHKSLDKEVLVILKRGAEYRGKLIGYDIHLNVVLADAQLIENGEPKKSYGKIVIRGDNVLAISPVEIE.

The Sm domain maps to 4 to 76 (RPLDVIHKSL…VLAISPVEIE (73 aa)).

The protein belongs to the snRNP Sm proteins family.

In Thermococcus sibiricus (strain DSM 12597 / MM 739), this protein is Putative snRNP Sm-like protein.